The primary structure comprises 264 residues: Polyneuridine aldehyde esterase (264 aa).

A propeptide spanning residues 1–6 (MHSAAN) is cleaved from the precursor. The 111-residue stretch at 12–122 (HFVLVHGGCL…MMPDPNHSLT (111 aa)) folds into the AB hydrolase-1 domain. Catalysis depends on residues S87, D216, and H244. Residue S87 coordinates 16-epivellosimine.

This sequence belongs to the AB hydrolase superfamily. As to quaternary structure, homodimer; homodimerizes in aqueous solutions at pH 7.0. In terms of tissue distribution, mainly expressed in roots and, to a lower level, in leaves.

It catalyses the reaction polyneuridine aldehyde + H2O = 16-epivellosimine + methanol + CO2. It participates in alkaloid biosynthesis; ajmaline biosynthesis. With respect to regulation, inhibited by DEPC and HgCl(2). Functionally, hydrolase involved in the biosynthesis of ajmaline-type monoterpenoid indole alkaloids (MIAs) natural products, important plant-derived pharmaceuticals used in the therapy of heart disorders. Catalyzes the hydrolysis of polyneuridine aldehyde into epi-vellosimine, precursor of vomilenine, an intermediate chemical in the biosynthesis of ajmaline. The polypeptide is Polyneuridine aldehyde esterase (Rauvolfia serpentina (Serpentine wood)).